Reading from the N-terminus, the 403-residue chain is Ribosomal RNA large subunit methyltransferase I (403 aa).

Residues 9–88 enclose the PUA domain; it reads YPRLILSKGR…ESIDIAFFTR (80 aa).

This sequence belongs to the methyltransferase superfamily. RlmI family.

It is found in the cytoplasm. It carries out the reaction cytidine(1962) in 23S rRNA + S-adenosyl-L-methionine = 5-methylcytidine(1962) in 23S rRNA + S-adenosyl-L-homocysteine + H(+). Functionally, specifically methylates the cytosine at position 1962 (m5C1962) of 23S rRNA. This is Ribosomal RNA large subunit methyltransferase I from Salmonella paratyphi C (strain RKS4594).